The chain runs to 158 residues: NAD(P)H-quinone oxidoreductase subunit J, chloroplastic (158 aa).

Belongs to the complex I 30 kDa subunit family. NDH is composed of at least 16 different subunits, 5 of which are encoded in the nucleus.

The protein localises to the plastid. It localises to the chloroplast thylakoid membrane. The enzyme catalyses a plastoquinone + NADH + (n+1) H(+)(in) = a plastoquinol + NAD(+) + n H(+)(out). It carries out the reaction a plastoquinone + NADPH + (n+1) H(+)(in) = a plastoquinol + NADP(+) + n H(+)(out). In terms of biological role, NDH shuttles electrons from NAD(P)H:plastoquinone, via FMN and iron-sulfur (Fe-S) centers, to quinones in the photosynthetic chain and possibly in a chloroplast respiratory chain. The immediate electron acceptor for the enzyme in this species is believed to be plastoquinone. Couples the redox reaction to proton translocation, and thus conserves the redox energy in a proton gradient. In Angiopteris evecta (Mule's foot fern), this protein is NAD(P)H-quinone oxidoreductase subunit J, chloroplastic.